We begin with the raw amino-acid sequence, 318 residues long: uncharacterized protein (318 aa).

Belongs to the glycosyltransferase 2 family.

This is an uncharacterized protein from Rickettsia typhi (strain ATCC VR-144 / Wilmington).